The chain runs to 66 residues: UPF0370 protein YpfN (66 aa).

Residues 4–24 (LAKYWWILVLVFLVGVLLNVI) traverse the membrane as a helical segment. The disordered stretch occupies residues 39 to 66 (KPELPPHRDFNDKWDDEDDWPKKDQSKK). The segment covering 42–51 (LPPHRDFNDK) has biased composition (basic and acidic residues).

Belongs to the UPF0370 family.

The protein resides in the cell membrane. This chain is UPF0370 protein YpfN, found in Salmonella arizonae (strain ATCC BAA-731 / CDC346-86 / RSK2980).